The following is a 270-amino-acid chain: Putative pyruvate, phosphate dikinase regulatory protein (270 aa).

148–155 (GISRTSKT) contributes to the ADP binding site.

It belongs to the pyruvate, phosphate/water dikinase regulatory protein family. PDRP subfamily.

The catalysed reaction is N(tele)-phospho-L-histidyl/L-threonyl-[pyruvate, phosphate dikinase] + ADP = N(tele)-phospho-L-histidyl/O-phospho-L-threonyl-[pyruvate, phosphate dikinase] + AMP + H(+). The enzyme catalyses N(tele)-phospho-L-histidyl/O-phospho-L-threonyl-[pyruvate, phosphate dikinase] + phosphate + H(+) = N(tele)-phospho-L-histidyl/L-threonyl-[pyruvate, phosphate dikinase] + diphosphate. Its function is as follows. Bifunctional serine/threonine kinase and phosphorylase involved in the regulation of the pyruvate, phosphate dikinase (PPDK) by catalyzing its phosphorylation/dephosphorylation. In Bacillus mycoides (strain KBAB4) (Bacillus weihenstephanensis), this protein is Putative pyruvate, phosphate dikinase regulatory protein.